Reading from the N-terminus, the 244-residue chain is Inner kinetochore subunit fta7 (244 aa).

It belongs to the CENP-Q/OKP1 family. As to quaternary structure, component of the heterotetrameric kinetochore subcomplex COMA, which consists of fta2, fta7, mal2 and mis17. The COMA subcomplex is part of a larger constitutive centromere-associated network (CCAN) (also known as central kinetochore Sim4 complex in fission yeast), which is composed of at least cnl2, cnp3, cnp20, fta1, fta2, fta3, fta4, fta6, fta7, mal2, mhf1, mhf2, mis6, mis15, mis17, sim4 and wip1.

It is found in the nucleus. The protein resides in the chromosome. Its subcellular location is the centromere. The protein localises to the kinetochore. It localises to the cytoplasm. It is found in the cytoskeleton. The protein resides in the microtubule organizing center. Its subcellular location is the spindle pole body. Functionally, component of the kinetochore, a multiprotein complex that assembles on centromeric DNA and attaches chromosomes to spindle microtubules, mediating chromosome segregation and sister chromatid segregation during meiosis and mitosis. Component of the inner kinetochore COMA complex, which connects centromere-associated proteins and the outer kinetochore. COMA interacts with other inner kinetochore proteins to form the inner kinetochore constitutive centromere-associated network (CCAN), which serves as a structural platform for outer kinetochore assembly. This chain is Inner kinetochore subunit fta7 (fta7), found in Schizosaccharomyces pombe (strain 972 / ATCC 24843) (Fission yeast).